Here is a 514-residue protein sequence, read N- to C-terminus: Peptide chain release factor 3 (514 aa).

One can recognise a tr-type G domain in the interval 8-268 (KKRRTFAIIS…TFLKFAPEPH (261 aa)). Residues 17–24 (SHPDAGKT), 85–89 (DTPGH), and 139–142 (NKLD) each bind GTP.

It belongs to the TRAFAC class translation factor GTPase superfamily. Classic translation factor GTPase family. PrfC subfamily.

Its subcellular location is the cytoplasm. Functionally, increases the formation of ribosomal termination complexes and stimulates activities of RF-1 and RF-2. It binds guanine nucleotides and has strong preference for UGA stop codons. It may interact directly with the ribosome. The stimulation of RF-1 and RF-2 is significantly reduced by GTP and GDP, but not by GMP. The polypeptide is Peptide chain release factor 3 (Streptococcus sanguinis (strain SK36)).